A 145-amino-acid chain; its full sequence is Putative nickel-responsive regulator (145 aa).

Residues H77, H88, H90, and C96 each coordinate Ni(2+).

Belongs to the transcriptional regulatory CopG/NikR family. Ni(2+) serves as cofactor.

Transcriptional regulator. This Rhizobium rhizogenes (strain K84 / ATCC BAA-868) (Agrobacterium radiobacter) protein is Putative nickel-responsive regulator.